The primary structure comprises 178 residues: MDQKARIKIDGVIVCEGKTDQAKLQQIFDVDVITTNGSALKKETINLIKKISEKQTVILLLDPDQQGKKIRSKLEQHLTNYYNCYVDMNARLKNAKKAGIAEMETSALIAALNNRVAITKNANQSILWDQYLSLKLNDKKKRLLLCNNLNLPYFNHKQLFKKLNLLNLTFQDVWKHLK.

The Toprim domain occupies 10–94; sequence DGVIVCEGKT…YVDMNARLKN (85 aa). Mg(2+) contacts are provided by glutamate 16, aspartate 62, and aspartate 64.

This sequence belongs to the ribonuclease M5 family. Mg(2+) serves as cofactor.

Its subcellular location is the cytoplasm. It carries out the reaction Endonucleolytic cleavage of RNA, removing 21 and 42 nucleotides, respectively, from the 5'- and 3'-termini of a 5S-rRNA precursor.. In terms of biological role, required for correct processing of both the 5' and 3' ends of 5S rRNA precursor. Cleaves both sides of a double-stranded region yielding mature 5S rRNA in one step. This is Ribonuclease M5 (rnmV) from Mycoplasma genitalium (strain ATCC 33530 / DSM 19775 / NCTC 10195 / G37) (Mycoplasmoides genitalium).